Consider the following 923-residue polypeptide: MFWKFDLNTTSHVDKLLDKEHVTLQELMDEDDILQECKAQNQKLLDFLCRQQCMEELVNLITQDPPQDMEEKVRFKYPNTACELLTCDVPQISDRLGEDESLLNLLYDFLDQEPPLNPLLASFFSKTIGNLIARKTEQVIMFLKKKEKFISQLLKHIGTSALMDLLLRLVSCVEPVGLRQEVLHWLNEEKIIQRLVALIHPHQDEDRQSNASQALCDIIRLGRDQGSQLQETVEPDPLLITLESQDCVEQLLKNMFDGDQTESCLVSGMQVLLALLEPRRVGTEGLVDSFSQGLERSHSVSSSILRGIEPWLKNFHQLLLNPPKKKAILTTIGVLEEPLGNARLHGARLMAALLHTNTPGINQELCRLNTMDLLLDLFFKYTWNNFLHLQVELCIAAILSHAAREEQAEASGSDGKVEPLQGSGDGNGKLETTPSITSPPENTMVTHLFQKCCLVQRILEAWEANDHTQAAGGMRRGNMGHLTRIANAVVQNLEQGPVQAHISEVIRGLPADCRGRWESFVEETLMETNRRNTVDLAFSEYQIQQMTANFVDQFGFNDEEFADQDDNINAPFDRIAEINFNIEADEDSPSAALFEACCSDRIQPFDDDEEEDIWEDDETRCAARVMARARFGAPHVSDNYSKNALEHGGQDRKTGSAVARNVPGLAAPSSPTQKEGPRSESDSAGTTWTAVFDEPVNPLSATPGAARDVGSSAWAAGPSVVEEKGWAKFTDFQPFCCSETGPRCSSPVDMDHSNAEGGQSPGPEKTFGPTSPCAWNVCVTRKAPLVASDSSSSGGSDSEDDEKAAGAVEAVCTGHTGKVSPPPRTAEAAVGRAECPDSTVLAPACPAPSEVTISPAVATIAPSKAGSPTATIVVSSSVAAAVPPGPIVAVTTAAPAIVATLGTMTKDRKADALPEGAALNGPV.

Serine 289 is subject to Phosphoserine. 3 disordered regions span residues 409–441 (EASG…SPPE), 662–685 (VPGL…DSAG), and 743–766 (RCSS…PEKT). Polar residues predominate over residues 430–441 (LETTPSITSPPE). A phosphoserine mark is found at serine 746 and serine 796.

Belongs to the SAPS family. As to quaternary structure, protein phosphatase 6 (PP6) holoenzyme is proposed to be a heterotrimeric complex formed by the catalytic subunit, a SAPS domain-containing subunit (PP6R) and an ankyrin repeat-domain containing regulatory subunit (ARS). Interacts with PPP6C and NFKBIE. Interacts with ANKRD28. As to expression, strongest expression in bladder and lower levels found in heart and pancreas. Very weak expression observed in all other tissues tested.

The protein localises to the cytoplasm. Its function is as follows. Regulatory subunit of protein phosphatase 6 (PP6). May function as a scaffolding PP6 subunit. Involved in the PP6-mediated dephosphorylation of NFKBIE opposing its degradation in response to TNF-alpha. The polypeptide is Serine/threonine-protein phosphatase 6 regulatory subunit 2 (Ppp6r2) (Mus musculus (Mouse)).